Reading from the N-terminus, the 209-residue chain is Peroxynitrite isomerase 2 (209 aa).

The short motif at 56–62 (GVWRGEG) is the GXWXGXG element. 2 residues coordinate heme b: K172 and H199.

It belongs to the nitrobindin family. Homodimer. It depends on heme b as a cofactor.

The enzyme catalyses peroxynitrite = nitrate. Its pathway is nitrogen metabolism. In terms of biological role, heme-binding protein able to scavenge peroxynitrite and to protect free L-tyrosine against peroxynitrite-mediated nitration, by acting as a peroxynitrite isomerase that converts peroxynitrite to nitrate. Therefore, this protein likely plays a role in peroxynitrite sensing and in the detoxification of reactive nitrogen and oxygen species (RNS and ROS, respectively). Is able to bind nitric oxide (NO) in vitro, but may act as a sensor of peroxynitrite levels in vivo. The chain is Peroxynitrite isomerase 2 from Mycolicibacterium gilvum (strain PYR-GCK) (Mycobacterium gilvum (strain PYR-GCK)).